We begin with the raw amino-acid sequence, 332 residues long: Ketol-acid reductoisomerase (NAD(+)) (332 aa).

In terms of domain architecture, KARI N-terminal Rossmann spans 1–186 (MEILHDEDVD…HWTKAGILEC (186 aa)). Residues 24 to 27 (YGAQ), E46, N55, S57, and 87 to 90 (DEVQ) contribute to the NAD(+) site. H112 is a catalytic residue. Residue G138 participates in NAD(+) binding. The 146-residue stretch at 187 to 332 (TFEQETYEDL…AEIRKLFAQK (146 aa)) folds into the KARI C-terminal knotted domain. Mg(2+) contacts are provided by D195, E199, E231, and E235. S256 is a substrate binding site.

It belongs to the ketol-acid reductoisomerase family. In terms of assembly, homodimer. Mg(2+) is required as a cofactor.

It carries out the reaction (2R)-2,3-dihydroxy-3-methylbutanoate + NAD(+) = (2S)-2-acetolactate + NADH + H(+). The protein operates within amino-acid biosynthesis; L-isoleucine biosynthesis; L-isoleucine from 2-oxobutanoate: step 2/4. It participates in amino-acid biosynthesis; L-valine biosynthesis; L-valine from pyruvate: step 2/4. In terms of biological role, involved in the biosynthesis of branched-chain amino acids (BCAA). Catalyzes an alkyl-migration followed by a ketol-acid reduction of (S)-2-acetolactate (S2AL) to yield (R)-2,3-dihydroxy-isovalerate. In the isomerase reaction, S2AL is rearranged via a Mg-dependent methyl migration to produce 3-hydroxy-3-methyl-2-ketobutyrate (HMKB). In the reductase reaction, this 2-ketoacid undergoes a metal-dependent reduction by NADH to yield (R)-2,3-dihydroxy-isovalerate. The protein is Ketol-acid reductoisomerase (NAD(+)) of Uncultured archaeon GZfos26G2.